The primary structure comprises 424 residues: GTPase Obg (424 aa).

An Obg domain is found at 1-158 (MFVDKARIFV…RWISLELKLL (158 aa)). The OBG-type G domain maps to 159-331 (ADVGLIGFPN…LLKECARVLS (173 aa)). Residues 165 to 172 (GFPNVGKS), 190 to 194 (FTTIT), 212 to 215 (DIPG), 282 to 285 (NKAD), and 312 to 314 (SAA) each bind GTP. Mg(2+) contacts are provided by Ser172 and Thr192. An OCT domain is found at 345-424 (RFVPEDKHFT…LNDFEFEFLK (80 aa)).

The protein belongs to the TRAFAC class OBG-HflX-like GTPase superfamily. OBG GTPase family. As to quaternary structure, monomer. Requires Mg(2+) as cofactor.

The protein localises to the cytoplasm. An essential GTPase which binds GTP, GDP and possibly (p)ppGpp with moderate affinity, with high nucleotide exchange rates and a fairly low GTP hydrolysis rate. Plays a role in control of the cell cycle, stress response, ribosome biogenesis and in those bacteria that undergo differentiation, in morphogenesis control. This is GTPase Obg from Clostridium acetobutylicum (strain ATCC 824 / DSM 792 / JCM 1419 / IAM 19013 / LMG 5710 / NBRC 13948 / NRRL B-527 / VKM B-1787 / 2291 / W).